Here is a 114-residue protein sequence, read N- to C-terminus: Nucleoid-associated protein NT01CX_0824 (114 aa).

Belongs to the YbaB/EbfC family. In terms of assembly, homodimer.

It localises to the cytoplasm. The protein localises to the nucleoid. Its function is as follows. Binds to DNA and alters its conformation. May be involved in regulation of gene expression, nucleoid organization and DNA protection. This is Nucleoid-associated protein NT01CX_0824 from Clostridium novyi (strain NT).